Consider the following 204-residue polypeptide: Thiamine-phosphate synthase (204 aa).

4-amino-2-methyl-5-(diphosphooxymethyl)pyrimidine-binding positions include 28 to 32 (QLRIK) and N60. Mg(2+)-binding residues include D61 and D80. 4-amino-2-methyl-5-(diphosphooxymethyl)pyrimidine contacts are provided by S99 and K128. 2-[(2R,5Z)-2-carboxy-4-methylthiazol-5(2H)-ylidene]ethyl phosphate contacts are provided by residues G157 and 177–178 (VT).

The protein belongs to the thiamine-phosphate synthase family. Requires Mg(2+) as cofactor.

It carries out the reaction 2-[(2R,5Z)-2-carboxy-4-methylthiazol-5(2H)-ylidene]ethyl phosphate + 4-amino-2-methyl-5-(diphosphooxymethyl)pyrimidine + 2 H(+) = thiamine phosphate + CO2 + diphosphate. The catalysed reaction is 2-(2-carboxy-4-methylthiazol-5-yl)ethyl phosphate + 4-amino-2-methyl-5-(diphosphooxymethyl)pyrimidine + 2 H(+) = thiamine phosphate + CO2 + diphosphate. It catalyses the reaction 4-methyl-5-(2-phosphooxyethyl)-thiazole + 4-amino-2-methyl-5-(diphosphooxymethyl)pyrimidine + H(+) = thiamine phosphate + diphosphate. It functions in the pathway cofactor biosynthesis; thiamine diphosphate biosynthesis; thiamine phosphate from 4-amino-2-methyl-5-diphosphomethylpyrimidine and 4-methyl-5-(2-phosphoethyl)-thiazole: step 1/1. Condenses 4-methyl-5-(beta-hydroxyethyl)thiazole monophosphate (THZ-P) and 2-methyl-4-amino-5-hydroxymethyl pyrimidine pyrophosphate (HMP-PP) to form thiamine monophosphate (TMP). This Rhizobium etli (strain ATCC 51251 / DSM 11541 / JCM 21823 / NBRC 15573 / CFN 42) protein is Thiamine-phosphate synthase.